The chain runs to 313 residues: MAFTLTIPRFSAISRKPITCSSSRTQCPAPFTHGRSISLRRRLTLLPLKASTDQSGQVGGEEVDSKILPYCSINKNEKRTIGEMEQEFLQAMQSFYYEGKAIMSNEEFDNLKEELMWEGSSVVMLSSDEQRFLEASMAYVSGNPILSDEEYDKLKMKLKMDGSEIVCEGPRCSLRSKKVYSDLAIDYFKMFLLNVPATVVALGLFFFLDDITGFEITYLLELPEPFSFIFTWFAAVPAIVYLALSLTKLILKDFLILKGPCPNCGTENVSFFGTILSIPNDSNTNNVKCSGCGTEMVYDSGSRLITLPEGGKA.

Residues 1–49 (MAFTLTIPRFSAISRKPITCSSSRTQCPAPFTHGRSISLRRRLTLLPLK) constitute a chloroplast transit peptide. Residue Ala50 is modified to N-acetylalanine. Residues 50–187 (ASTDQSGQVG…KVYSDLAIDY (138 aa)) lie on the Stromal side of the membrane. Cys71 and Cys172 are joined by a disulfide. A helical membrane pass occupies residues 188–208 (FKMFLLNVPATVVALGLFFFL). Residues 209–225 (DDITGFEITYLLELPEP) lie on the Lumenal, thylakoid side of the membrane. Residues 226–246 (FSFIFTWFAAVPAIVYLALSL) traverse the membrane as a helical segment. At 247–313 (TKLILKDFLI…LITLPEGGKA (67 aa)) the chain is on the stromal side.

It belongs to the PGR5 family. In terms of assembly, homodimer and heterodimer with PGR5. Interacts with PGR5, FD2, psaD1, LFNR1 and LFNR2. Also interacts with petC and a Fe-containing cofactor (FCC). In terms of processing, disulfide bonds; Cys-289 and Cys-292 are probably involved in the formation of disulfide bridges with 'Cys-11' and 'Cys-105' of PGR5 while Cys-261 and Cys-264 are probably involved in the binding of a Fe-containing cofactor (FCC).

The protein resides in the plastid. It localises to the chloroplast thylakoid membrane. Inhibited by antimycin A. Ferredoxin-plastoquinone reductase involved in cyclic electron flow (CEF) around photosystem I. The homodimer is probably not involved in CEF. This Arabidopsis thaliana (Mouse-ear cress) protein is PGR5-like protein 1B, chloroplastic (PGRL1B).